The sequence spans 359 residues: 3-dehydroquinate synthase (359 aa).

NAD(+)-binding positions include 71–76 (DAEAAK), 105–109 (GAVTD), 129–130 (TT), Lys142, and Lys151. Zn(2+)-binding residues include Glu184, His247, and His263.

The protein belongs to the sugar phosphate cyclases superfamily. Dehydroquinate synthase family. Requires NAD(+) as cofactor. Co(2+) is required as a cofactor. It depends on Zn(2+) as a cofactor.

It localises to the cytoplasm. It catalyses the reaction 7-phospho-2-dehydro-3-deoxy-D-arabino-heptonate = 3-dehydroquinate + phosphate. It functions in the pathway metabolic intermediate biosynthesis; chorismate biosynthesis; chorismate from D-erythrose 4-phosphate and phosphoenolpyruvate: step 2/7. Functionally, catalyzes the conversion of 3-deoxy-D-arabino-heptulosonate 7-phosphate (DAHP) to dehydroquinate (DHQ). The polypeptide is 3-dehydroquinate synthase (Leifsonia xyli subsp. xyli (strain CTCB07)).